Reading from the N-terminus, the 234-residue chain is uncharacterized protein (234 aa).

4 LRR repeats span residues 44–63 (LEFL…LPKL), 64–84 (KLRK…EKCP), 85–107 (NLTH…PLKQ), and 111–134 (LKSL…VFKL). The segment at 161–234 (EGLDDEEEGE…GEEERGQKRK (74 aa)) is disordered. The segment covering 163–226 (LDDEEEGEHE…GEEDEEELGE (64 aa)) has biased composition (acidic residues).

It belongs to the ANP32 family. Expressed in activated stem cells, such as mobilized CD34+ cells and cord blood CD34+ cells, but not in resting bone marrow CD34+ cells. Expressed in a variety of neoplastic cell lines, mainly in prostatic adenocarcinoma cell lines. Not expressed in normal prostatic tissue.

This is an uncharacterized protein from Homo sapiens (Human).